The following is a 174-amino-acid chain: Secreted cysteine-rich protein UMAG_00792 (174 aa).

The signal sequence occupies residues 1–26 (MVSFKSSSLFLHSLSALLVLTTLSSA). A glycan (N-linked (GlcNAc...) asparagine) is linked at asparagine 77.

Secreted cysteine-rich proteins (SCRPs) are predicted to form amyloids.

The protein resides in the secreted. Secreted cysteine-rich protein that might form amyloid strutures which are involved in attachment to hydrophobic surfaces and in formation of hydrophobic aerial hyphae. In Mycosarcoma maydis (Corn smut fungus), this protein is Secreted cysteine-rich protein UMAG_00792.